A 287-amino-acid chain; its full sequence is Methylamine utilization ferredoxin-type protein MauN (287 aa).

4Fe-4S ferredoxin-type domains are found at residues Arg-218 to Lys-248 and Gly-251 to Arg-280. Residues Cys-227, Cys-230, Cys-233, Cys-237, Cys-260, Cys-263, Cys-266, and Cys-270 each contribute to the [4Fe-4S] cluster site.

The protein operates within one-carbon metabolism; methylamine degradation. Its function is as follows. Involved in electron transfer. In Methylorubrum extorquens (strain ATCC 14718 / DSM 1338 / JCM 2805 / NCIMB 9133 / AM1) (Methylobacterium extorquens), this protein is Methylamine utilization ferredoxin-type protein MauN (mauN).